Here is a 152-residue protein sequence, read N- to C-terminus: Nucleoside diphosphate kinase B (152 aa).

Positions 1-66 (MAHAERTFIA…DRPFFPGLVK (66 aa)) are interaction with AKAP13. The ATP site is built by lysine 12, phenylalanine 60, arginine 88, threonine 94, arginine 105, and asparagine 115. Histidine 118 functions as the Pros-phosphohistidine intermediate in the catalytic mechanism.

The protein belongs to the NDK family. As to quaternary structure, hexamer of two different chains: An and B (A6, A5B, A4B2, A3B3, A2B4, AB5, B6). Interacts with CAPN8. Interacts with AKAP13. Interacts with ITGB1BP1 (via C-terminal domain region). Interacts with BCL2L10. Requires Mg(2+) as cofactor.

Its subcellular location is the cytoplasm. It is found in the cell projection. It localises to the lamellipodium. The protein resides in the ruffle. The protein localises to the nucleus. It catalyses the reaction a 2'-deoxyribonucleoside 5'-diphosphate + ATP = a 2'-deoxyribonucleoside 5'-triphosphate + ADP. It carries out the reaction a ribonucleoside 5'-diphosphate + ATP = a ribonucleoside 5'-triphosphate + ADP. The catalysed reaction is ATP + protein L-histidine = ADP + protein N-phospho-L-histidine.. Major role in the synthesis of nucleoside triphosphates other than ATP. The ATP gamma phosphate is transferred to the NDP beta phosphate via a ping-pong mechanism, using a phosphorylated active-site intermediate. Negatively regulates Rho activity by interacting with AKAP13/LBC. Acts as a transcriptional activator of the MYC gene; binds DNA non-specifically. Binds to both single-stranded guanine- and cytosine-rich strands within the nuclease hypersensitive element (NHE) III(1) region of the MYC gene promoter. Does not bind to duplex NHE III(1). Has G-quadruplex (G4) DNA-binding activity, which is independent of its nucleotide-binding and kinase activity. Binds both folded and unfolded G4 with similar low nanomolar affinities. Stabilizes folded G4s regardless of whether they are prefolded or not. Exhibits histidine protein kinase activity. The polypeptide is Nucleoside diphosphate kinase B (NME2) (Bos taurus (Bovine)).